A 191-amino-acid polypeptide reads, in one-letter code: Probable molybdenum cofactor guanylyltransferase (191 aa).

GTP is bound by residues 6-8, Lys18, Asp67, and Asp92; that span reads LAG. Asp92 lines the Mg(2+) pocket.

This sequence belongs to the MobA family. Mg(2+) is required as a cofactor.

It is found in the cytoplasm. It carries out the reaction Mo-molybdopterin + GTP + H(+) = Mo-molybdopterin guanine dinucleotide + diphosphate. Its function is as follows. Transfers a GMP moiety from GTP to Mo-molybdopterin (Mo-MPT) cofactor (Moco or molybdenum cofactor) to form Mo-molybdopterin guanine dinucleotide (Mo-MGD) cofactor. The protein is Probable molybdenum cofactor guanylyltransferase of Thermococcus gammatolerans (strain DSM 15229 / JCM 11827 / EJ3).